A 49-amino-acid chain; its full sequence is Large ribosomal subunit protein eL40 (49 aa).

It belongs to the eukaryotic ribosomal protein eL40 family.

The chain is Large ribosomal subunit protein eL40 from Halorubrum lacusprofundi (strain ATCC 49239 / DSM 5036 / JCM 8891 / ACAM 34).